The chain runs to 92 residues: Large ribosomal subunit protein bL31 (92 aa).

Positions 66–92 (GMGSANPDVDAPAPKKAAKKSDAESDS) are disordered. Residues 70–80 (ANPDVDAPAPK) show a composition bias toward low complexity.

This sequence belongs to the bacterial ribosomal protein bL31 family. Type A subfamily. In terms of assembly, part of the 50S ribosomal subunit.

Binds the 23S rRNA. This is Large ribosomal subunit protein bL31 from Synechococcus sp. (strain RCC307).